Here is a 94-residue protein sequence, read N- to C-terminus: Co-chaperonin GroES (94 aa).

It belongs to the GroES chaperonin family. In terms of assembly, heptamer of 7 subunits arranged in a ring. Interacts with the chaperonin GroEL.

It is found in the cytoplasm. Together with the chaperonin GroEL, plays an essential role in assisting protein folding. The GroEL-GroES system forms a nano-cage that allows encapsulation of the non-native substrate proteins and provides a physical environment optimized to promote and accelerate protein folding. GroES binds to the apical surface of the GroEL ring, thereby capping the opening of the GroEL channel. This is Co-chaperonin GroES from Streptococcus oralis.